A 585-amino-acid polypeptide reads, in one-letter code: ATP-dependent lipid A-core flippase (585 aa).

5 consecutive transmembrane segments (helical) span residues 16–36 (LWPY…ALII), 66–86 (FLSM…ASGF), 156–176 (IIGL…ILLV), 252–272 (AIAN…VLVL), and 278–298 (LRAE…FGLM). The 285-residue stretch at 29 to 313 (VAVVALIINA…LTNVTSQFQR (285 aa)) folds into the ABC transmembrane type-1 domain. Positions 345–581 (IQVKNVTFTY…DGAYAQLHRI (237 aa)) constitute an ABC transporter domain. 379–386 (GRSGSGKS) provides a ligand contact to ATP.

Belongs to the ABC transporter superfamily. Lipid exporter (TC 3.A.1.106) family. As to quaternary structure, homodimer.

The protein resides in the cell inner membrane. It catalyses the reaction ATP + H2O + lipid A-core oligosaccharideSide 1 = ADP + phosphate + lipid A-core oligosaccharideSide 2.. Its function is as follows. Involved in lipopolysaccharide (LPS) biosynthesis. Translocates lipid A-core from the inner to the outer leaflet of the inner membrane. Transmembrane domains (TMD) form a pore in the inner membrane and the ATP-binding domain (NBD) is responsible for energy generation. This chain is ATP-dependent lipid A-core flippase, found in Photobacterium profundum (strain SS9).